The chain runs to 920 residues: Valine--tRNA ligase (920 aa).

The short motif at 40 to 50 (PNVTGTLHMGH) is the 'HIGH' region element. Residues 522–526 (KMSKS) carry the 'KMSKS' region motif. Lysine 525 contributes to the ATP binding site. 2 coiled-coil regions span residues 642-668 (EWIR…DLLA) and 849-920 (AGVI…IESL).

Belongs to the class-I aminoacyl-tRNA synthetase family. ValS type 1 subfamily. Monomer.

It localises to the cytoplasm. It catalyses the reaction tRNA(Val) + L-valine + ATP = L-valyl-tRNA(Val) + AMP + diphosphate. In terms of biological role, catalyzes the attachment of valine to tRNA(Val). As ValRS can inadvertently accommodate and process structurally similar amino acids such as threonine, to avoid such errors, it has a 'posttransfer' editing activity that hydrolyzes mischarged Thr-tRNA(Val) in a tRNA-dependent manner. The protein is Valine--tRNA ligase of Coxiella burnetii (strain RSA 493 / Nine Mile phase I).